Here is a 228-residue protein sequence, read N- to C-terminus: Ribonuclease HII (228 aa).

Residues 1 to 210 form the RNase H type-2 domain; the sequence is MKIAGIDEAG…LKKIAEKVES (210 aa). Residues Asp7, Glu8, and Asp105 each coordinate a divalent metal cation.

This sequence belongs to the RNase HII family. As to quaternary structure, monomer. The cofactor is Mn(2+). It depends on Mg(2+) as a cofactor.

The protein resides in the cytoplasm. It carries out the reaction Endonucleolytic cleavage to 5'-phosphomonoester.. Endonuclease that specifically degrades the RNA of RNA-DNA hybrids. The sequence is that of Ribonuclease HII (rnhB) from Thermococcus kodakarensis (strain ATCC BAA-918 / JCM 12380 / KOD1) (Pyrococcus kodakaraensis (strain KOD1)).